The primary structure comprises 601 residues: Elongation factor 4 (601 aa).

Positions 7–189 (DNIRNFSIVA…AIVKRLPAPK (183 aa)) constitute a tr-type G domain. GTP is bound by residues 19 to 24 (DHGKST) and 136 to 139 (NKVD).

It belongs to the TRAFAC class translation factor GTPase superfamily. Classic translation factor GTPase family. LepA subfamily.

It is found in the cell inner membrane. The catalysed reaction is GTP + H2O = GDP + phosphate + H(+). Required for accurate and efficient protein synthesis under certain stress conditions. May act as a fidelity factor of the translation reaction, by catalyzing a one-codon backward translocation of tRNAs on improperly translocated ribosomes. Back-translocation proceeds from a post-translocation (POST) complex to a pre-translocation (PRE) complex, thus giving elongation factor G a second chance to translocate the tRNAs correctly. Binds to ribosomes in a GTP-dependent manner. In Methylorubrum extorquens (strain CM4 / NCIMB 13688) (Methylobacterium extorquens), this protein is Elongation factor 4.